The chain runs to 652 residues: Fimbrin-4 (652 aa).

4 consecutive Calponin-homology (CH) domains span residues 116 to 233, 261 to 364, 388 to 494, and 509 to 617; these read ESEK…KIQL, LAPE…HHRN, SREE…RYTM, and DITE…NWSL. Actin-binding regions lie at residues 116 to 364 and 388 to 617; these read ESEK…HHRN and SREE…NWSL. The segment at 623–652 is disordered; sequence TESTVSDDTDVSSVTEEISNLSTDDGSSDV. Polar residues predominate over residues 640–652; sequence ISNLSTDDGSSDV.

Interacts with F-actin.

It is found in the cytoplasm. Its subcellular location is the cytoskeleton. In terms of biological role, cross-links actin filaments (F-actin). Stabilizes and prevents F-actin depolymerization mediated by profilin. May regulate actin cytoarchitecture, cell cycle, cell division, cell elongation and cytoplasmic tractus. This chain is Fimbrin-4, found in Arabidopsis thaliana (Mouse-ear cress).